Here is a 148-residue protein sequence, read N- to C-terminus: uncharacterized protein (148 aa).

Residues 1–17 show a composition bias toward low complexity; it reads MCPPVRQRPAQAPPAKR. Disordered stretches follow at residues 1–86 and 122–148; these read MCPP…VQSP and RAHR…TSPC. Residues 38–57 are compositionally biased toward basic residues; sequence RPPKMQRRPRPPVAKRRRFP. The span at 137–148 shows a compositional bias: polar residues; it reads QRPSPDSQTSPC.

It belongs to the Epstein-Barr virus BLLF2 family.

This is an uncharacterized protein from Epstein-Barr virus (strain AG876) (HHV-4).